The following is a 259-amino-acid chain: Bisphosphoglycerate mutase (259 aa).

An N-acetylserine modification is found at Ser-2. Residues Lys-3 and Lys-5 are each glycosylated (N-linked (Glc) (glycation) lysine; in vitro). 10 to 17 (RHGEGAWN) contacts substrate. His-11 acts as the Tele-phosphohistidine intermediate in catalysis. Lys-18 is a glycosylation site (N-linked (Glc) (glycation) lysine; in vitro). Residue 23 to 24 (CS) coordinates substrate. N-linked (Glc) (glycation) lysine; in vitro glycosylation occurs at Lys-43. Substrate-binding positions include Arg-62, 89–92 (ERHY), Arg-100, and 116–117 (RR). Glu-89 functions as the Proton donor/acceptor in the catalytic mechanism. Thr-122 bears the Phosphothreonine mark. Residue Lys-159 is glycosylated (N-linked (Glc) (glycation) lysine). A substrate-binding site is contributed by 189–190 (GN). Lys-197 carries an N-linked (Glc) (glycation) lysine; in vitro glycan.

The protein belongs to the phosphoglycerate mutase family. BPG-dependent PGAM subfamily. As to quaternary structure, homodimer. In terms of processing, glycation of Lys-159 in diabetic patients inactivates the enzyme. In terms of tissue distribution, expressed in red blood cells. Expressed in non-erythroid cells of the placenta; present in the syncytiotrophoblast layer of the placental villi at the feto-maternal interface (at protein level).

It catalyses the reaction (2R)-3-phospho-glyceroyl phosphate = (2R)-2,3-bisphosphoglycerate + H(+). The catalysed reaction is (2R)-2-phosphoglycerate = (2R)-3-phosphoglycerate. Its activity is regulated as follows. At alkaline pH BPGM favors the synthase reaction; however, at lower pH the phosphatase reaction is dominant. Inhibited by citrate. In terms of biological role, plays a major role in regulating hemoglobin oxygen affinity by controlling the levels of its allosteric effector 2,3-bisphosphoglycerate (2,3-BPG). Also exhibits mutase (EC 5.4.2.11) activity. The sequence is that of Bisphosphoglycerate mutase (BPGM) from Homo sapiens (Human).